The primary structure comprises 491 residues: Chromosomal replication initiator protein DnaA (491 aa).

Residues M1–L69 form a domain I, interacts with DnaA modulators region. The segment at L69–L154 is domain II. Positions P155 to S371 are domain III, AAA+ region. Positions 199, 201, 202, and 203 each coordinate ATP. Residues K372–R491 form a domain IV, binds dsDNA region.

Belongs to the DnaA family. As to quaternary structure, oligomerizes as a right-handed, spiral filament on DNA at oriC.

Its subcellular location is the cytoplasm. Its function is as follows. Plays an essential role in the initiation and regulation of chromosomal replication. ATP-DnaA binds to the origin of replication (oriC) to initiate formation of the DNA replication initiation complex once per cell cycle. Binds the DnaA box (a 9 base pair repeat at the origin) and separates the double-stranded (ds)DNA. Forms a right-handed helical filament on oriC DNA; dsDNA binds to the exterior of the filament while single-stranded (ss)DNA is stabiized in the filament's interior. The ATP-DnaA-oriC complex binds and stabilizes one strand of the AT-rich DNA unwinding element (DUE), permitting loading of DNA polymerase. After initiation quickly degrades to an ADP-DnaA complex that is not apt for DNA replication. Binds acidic phospholipids. The sequence is that of Chromosomal replication initiator protein DnaA from Francisella tularensis subsp. holarctica (strain LVS).